Consider the following 97-residue polypeptide: Co-chaperonin GroES (97 aa).

The protein belongs to the GroES chaperonin family. In terms of assembly, heptamer of 7 subunits arranged in a ring. Interacts with the chaperonin GroEL.

The protein localises to the cytoplasm. Its function is as follows. Together with the chaperonin GroEL, plays an essential role in assisting protein folding. The GroEL-GroES system forms a nano-cage that allows encapsulation of the non-native substrate proteins and provides a physical environment optimized to promote and accelerate protein folding. GroES binds to the apical surface of the GroEL ring, thereby capping the opening of the GroEL channel. The polypeptide is Co-chaperonin GroES (Wigglesworthia glossinidia brevipalpis).